Reading from the N-terminus, the 103-residue chain is Pseudonajatoxin b homolog (103 aa).

An N-terminal signal peptide occupies residues 1-21; it reads MKTLLLTLVVVTIVCLDLGYT. 5 disulfide bridges follow: cysteine 24/cysteine 42, cysteine 35/cysteine 63, cysteine 48/cysteine 52, cysteine 67/cysteine 79, and cysteine 80/cysteine 85.

Belongs to the three-finger toxin family. Long-chain subfamily. Type II alpha-neurotoxin sub-subfamily. Expressed by the venom gland.

Its subcellular location is the secreted. Its function is as follows. Binds with high affinity to muscular (alpha-1/CHRNA1) and neuronal (alpha-7/CHRNA7) nicotinic acetylcholine receptor (nAChR) and inhibits acetylcholine from binding to the receptor, thereby impairing neuromuscular and neuronal transmission. This Pseudonaja textilis (Eastern brown snake) protein is Pseudonajatoxin b homolog.